Consider the following 322-residue polypeptide: GTP 3',8-cyclase (322 aa).

One can recognise a Radical SAM core domain in the interval 4–229; the sequence is NFNRNIDYLR…IPVQMKKSGP (226 aa). Residue Arg-13 coordinates GTP. Cys-20 and Cys-24 together coordinate [4Fe-4S] cluster. S-adenosyl-L-methionine is bound at residue Tyr-26. Residue Cys-27 coordinates [4Fe-4S] cluster. Position 64 (Arg-64) interacts with GTP. Gly-68 serves as a coordination point for S-adenosyl-L-methionine. Position 95 (Thr-95) interacts with GTP. Ser-119 serves as a coordination point for S-adenosyl-L-methionine. Lys-156 contributes to the GTP binding site. Residue Met-190 participates in S-adenosyl-L-methionine binding. Positions 253 and 256 each coordinate [4Fe-4S] cluster. Residue 258–260 participates in GTP binding; it reads RLR. [4Fe-4S] cluster is bound at residue Cys-270.

This sequence belongs to the radical SAM superfamily. MoaA family. As to quaternary structure, monomer and homodimer. Requires [4Fe-4S] cluster as cofactor.

It carries out the reaction GTP + AH2 + S-adenosyl-L-methionine = (8S)-3',8-cyclo-7,8-dihydroguanosine 5'-triphosphate + 5'-deoxyadenosine + L-methionine + A + H(+). It participates in cofactor biosynthesis; molybdopterin biosynthesis. In terms of biological role, catalyzes the cyclization of GTP to (8S)-3',8-cyclo-7,8-dihydroguanosine 5'-triphosphate. In Thermodesulfovibrio yellowstonii (strain ATCC 51303 / DSM 11347 / YP87), this protein is GTP 3',8-cyclase.